A 307-amino-acid chain; its full sequence is MQKFDVKTFQGLILQLQDYWSRQGCTIIQPLDMEVGAGTSHPMTCLRALGPEPIACAYVQPSRRPTDGRYGENPNRLQHYYQFQVIIKPSPDNIQELYLGSLKELGMDPEIHDIRFVEDNWENPTLGAWGLGWEVWLNGMEVTQFTYFQQVGGLECKPVTGEITYGLERLAMYIQGVDSVYDLVWSDGPLGKTTYGDVFHQNEVEQSTYNFEHADVEFLFHCFEQYEKEAQNLLALEKPLPLPAYERILKAAHSFNLLDARKAISVTERQRYILRIRTLTKAVAEAYYASREALGFPMCQRSENKQG.

It belongs to the class-II aminoacyl-tRNA synthetase family. In terms of assembly, tetramer of two alpha and two beta subunits.

The protein localises to the cytoplasm. The catalysed reaction is tRNA(Gly) + glycine + ATP = glycyl-tRNA(Gly) + AMP + diphosphate. This Aeromonas hydrophila subsp. hydrophila (strain ATCC 7966 / DSM 30187 / BCRC 13018 / CCUG 14551 / JCM 1027 / KCTC 2358 / NCIMB 9240 / NCTC 8049) protein is Glycine--tRNA ligase alpha subunit.